The chain runs to 657 residues: Methionine--tRNA ligase (657 aa).

Positions 13-23 (YYPSGNLHIGH) match the 'HIGH' region motif. A 'KMSKS' region motif is present at residues 308-312 (KMSKS). Residue lysine 311 coordinates ATP. Residues 557–657 (DFDKVEIKAA…SAIPNGAVIK (101 aa)) enclose the tRNA-binding domain.

It belongs to the class-I aminoacyl-tRNA synthetase family. MetG type 2B subfamily. Homodimer.

It is found in the cytoplasm. It catalyses the reaction tRNA(Met) + L-methionine + ATP = L-methionyl-tRNA(Met) + AMP + diphosphate. Functionally, is required not only for elongation of protein synthesis but also for the initiation of all mRNA translation through initiator tRNA(fMet) aminoacylation. The chain is Methionine--tRNA ligase from Staphylococcus aureus (strain MRSA252).